A 79-amino-acid polypeptide reads, in one-letter code: Sec-independent protein translocase protein TatA (79 aa).

Residues 1-21 (MGGISIWQLLIILVIVVLLFG) traverse the membrane as a helical segment. Positions 45–79 (EEEKDADFEQKKQVEEKSAAEPVSTETQSDVKEKS) are disordered. Basic and acidic residues predominate over residues 51 to 63 (DFEQKKQVEEKSA).

The protein belongs to the TatA/E family. In terms of assembly, the Tat system comprises two distinct complexes: a TatABC complex, containing multiple copies of TatA, TatB and TatC subunits, and a separate TatA complex, containing only TatA subunits. Substrates initially bind to the TatABC complex, which probably triggers association of the separate TatA complex to form the active translocon.

Its subcellular location is the cell inner membrane. Its function is as follows. Part of the twin-arginine translocation (Tat) system that transports large folded proteins containing a characteristic twin-arginine motif in their signal peptide across membranes. TatA could form the protein-conducting channel of the Tat system. This Alteromonas mediterranea (strain DSM 17117 / CIP 110805 / LMG 28347 / Deep ecotype) protein is Sec-independent protein translocase protein TatA.